A 332-amino-acid chain; its full sequence is MTKNLLEQLREMTVVVADTGDIQAIEKFTPRDATTNPSLITAAAKMPEYQEIVDQTLLQAKKDAGAGASKGQIVSLAFDRLAVSFGLKILQIIPGRVSTEVDARLSYDTEATITKARELIAQYKAAGIGPERVLIKIASTWEGIKAAEILEKEGIHCNLTLLFGLHQAIACAEAGITLISPFVGRILDWYKKETGRDSYPSAEDPGVISVTTIYNYYKKFGYTTEVMGASFRNIGEITELAGSDLLTISPGLLGELQATIGELPRKLDPAKAATLDIEKISIDKATFDKMHAADRMAYDKLDEGIKGFTKALEELETLLAERLARLEVVASH.

Catalysis depends on Lys-136, which acts as the Schiff-base intermediate with substrate.

Belongs to the transaldolase family. Type 1 subfamily.

The protein localises to the cytoplasm. It catalyses the reaction D-sedoheptulose 7-phosphate + D-glyceraldehyde 3-phosphate = D-erythrose 4-phosphate + beta-D-fructose 6-phosphate. It participates in carbohydrate degradation; pentose phosphate pathway; D-glyceraldehyde 3-phosphate and beta-D-fructose 6-phosphate from D-ribose 5-phosphate and D-xylulose 5-phosphate (non-oxidative stage): step 2/3. Transaldolase is important for the balance of metabolites in the pentose-phosphate pathway. The polypeptide is Transaldolase (Trichormus variabilis (strain ATCC 29413 / PCC 7937) (Anabaena variabilis)).